The following is a 243-amino-acid chain: MNNILLGVNIDHIATLRNARGTRYPDPVHAAEVAERAGADGITVHLREDRRHINDRDVRILKETIQTRMNLEMAVTDEMVSIALDTKPEFVCLVPEKREELTTEGGLDVAGQLEKIKAATQKLTDAGIKVSLFIDADRAQIDATLACGAPFVELHTGHYADAETEEAQQAELEKIASAATYAHGLGIKVNAGHGLTYHNVKPIAALPELYELNIGHSIISRAAFDGLNKAVADMKVEMLDARR.

Asn-9 lines the 3-amino-2-oxopropyl phosphate pocket. 11-12 (DH) contacts 1-deoxy-D-xylulose 5-phosphate. Arg-20 is a binding site for 3-amino-2-oxopropyl phosphate. The active-site Proton acceptor is His-45. Positions 47 and 52 each coordinate 1-deoxy-D-xylulose 5-phosphate. Glu-72 serves as the catalytic Proton acceptor. Thr-102 lines the 1-deoxy-D-xylulose 5-phosphate pocket. The active-site Proton donor is the His-193. Residues Gly-194 and 215-216 (GH) each bind 3-amino-2-oxopropyl phosphate.

It belongs to the PNP synthase family. Homooctamer; tetramer of dimers.

The protein resides in the cytoplasm. It carries out the reaction 3-amino-2-oxopropyl phosphate + 1-deoxy-D-xylulose 5-phosphate = pyridoxine 5'-phosphate + phosphate + 2 H2O + H(+). The protein operates within cofactor biosynthesis; pyridoxine 5'-phosphate biosynthesis; pyridoxine 5'-phosphate from D-erythrose 4-phosphate: step 5/5. In terms of biological role, catalyzes the complicated ring closure reaction between the two acyclic compounds 1-deoxy-D-xylulose-5-phosphate (DXP) and 3-amino-2-oxopropyl phosphate (1-amino-acetone-3-phosphate or AAP) to form pyridoxine 5'-phosphate (PNP) and inorganic phosphate. This is Pyridoxine 5'-phosphate synthase from Photobacterium profundum (strain SS9).